The primary structure comprises 119 residues: Ig heavy chain V region X44 (119 aa).

The Ig-like domain maps to 1–117 (EVKLLESGGG…WGQGTLVTVS (117 aa)).

The polypeptide is Ig heavy chain V region X44 (Mus musculus (Mouse)).